The following is a 938-amino-acid chain: E3 ubiquitin-protein ligase CBL-B (938 aa).

The tract at residues 35–167 (PPKQAAADRR…KAIFPNGQFQ (133 aa)) is 4H. In terms of domain architecture, Cbl-PTB spans 35-343 (PPKQAAADRR…GRSYNPDLTG (309 aa)). The tract at residues 168–240 (GDNFRITKAD…FEFDIFTRLF (73 aa)) is EF-hand-like. 5 residues coordinate Ca(2+): Asp-221, Thr-223, Asn-225, Tyr-227, and Glu-232. The interval 241 to 343 (QPWGSILRNW…GRSYNPDLTG (103 aa)) is SH2-like. Ser-282 carries the phosphoserine; by PKC/PRKCQ modification. Arg-286 contacts 4-O-phospho-L-tyrosine. Positions 344–372 (LCEPTPHDHIKVTQEQYELYCEMGSTFQL) are linker. The residue at position 363 (Tyr-363) is a Phosphotyrosine. The RING-type zinc finger occupies 373-412 (CKICAENDKDVKIEPCGHLMCTSCLTAWQESDGQGCPFCR). Positions 465 to 588 (ASVRKCTDRQ…SVPSRDQPMP (124 aa)) are disordered. Over residues 473-486 (RQNSPVTSPGSSPL) the composition is skewed to polar residues. Phosphoserine is present on residues Ser-476, Ser-480, Ser-484, Ser-521, Ser-525, and Ser-529. Residues 543–567 (PLPAPPPPLRDPPPPPERPPPIPPD) form an interaction with VAV1 region. Pro residues predominate over residues 544-566 (LPAPPPPLRDPPPPPERPPPIPP). Residue Ser-633 is modified to Phosphoserine. Residues Tyr-664 and Tyr-708 each carry the phosphotyrosine modification. Disordered stretches follow at residues 702–725 (EEDD…PSHC) and 771–885 (DALP…EAAL). Residues 714–724 (HPVSLNSQPSH) are compositionally biased toward polar residues. Residues 775 to 784 (PSLPPPPPPA) show a composition bias toward pro residues. Positions 794 to 804 (PPGSSSRPSSG) are enriched in low complexity. Polar residues predominate over residues 839 to 855 (NRASQDYDQLPSSSDGS). The residue at position 845 (Tyr-845) is a Phosphotyrosine. Positions 847–883 (QLPSSSDGSQAPARPPKPRPRRTAPEIHHRKPHGPEA) are interaction with SH3KBP1. The segment covering 862–878 (PKPRPRRTAPEIHHRKP) has biased composition (basic residues). A UBA domain is found at 887-926 (NVDAKIAKLMGEGYAFEEVKRALEIAQNNLEVARSILREF).

Interacts with SH3 domain-containing proteins LCK, CRK and SORBS1. Interacts with LCP2 and ZAP70. Interacts with CBL. Interacts with SH3 domain-containing proteins VAV1, FYN, FGR, PLCG1, GRB2, CRKL, PIK3R1 and SH3KBP1/CIN85. Identified in heterotrimeric complexes with SH3KBP1/CIN85, CD2AP and ARHGEF7, where one CBLB peptide binds two copies of the other protein. Interacts with poly-ubiquitinated proteins. Dimerization is required for the binding of poly-ubiquitin, but not for the binding of mono-ubiquitin. Interacts with EGFR (phosphorylated). Interacts with IFT20. Post-translationally, phosphorylated on tyrosine and serine residues upon TCR or BCR activation, and upon various types of cell stimulation. In terms of processing, auto-ubiquitinated upon EGF-mediated cell activation or upon T-cell costimulation by CD28; which promotes proteasomal degradation.

It localises to the cytoplasm. The catalysed reaction is S-ubiquitinyl-[E2 ubiquitin-conjugating enzyme]-L-cysteine + [acceptor protein]-L-lysine = [E2 ubiquitin-conjugating enzyme]-L-cysteine + N(6)-ubiquitinyl-[acceptor protein]-L-lysine.. It functions in the pathway protein modification; protein ubiquitination. Functionally, E3 ubiquitin-protein ligase which accepts ubiquitin from specific E2 ubiquitin-conjugating enzymes, and transfers it to substrates, generally promoting their degradation by the proteasome. Negatively regulates TCR (T-cell receptor), BCR (B-cell receptor) and FCER1 (high affinity immunoglobulin epsilon receptor) signal transduction pathways. In naive T-cells, inhibits VAV1 activation upon TCR engagement and imposes a requirement for CD28 costimulation for proliferation and IL-2 production. Also acts by promoting PIK3R1/p85 ubiquitination, which impairs its recruitment to the TCR and subsequent activation. In activated T-cells, inhibits PLCG1 activation and calcium mobilization upon restimulation and promotes anergy. In B-cells, acts by ubiquitinating SYK and promoting its proteasomal degradation. Slightly promotes SRC ubiquitination. May be involved in EGFR ubiquitination and internalization. May be functionally coupled with the E2 ubiquitin-protein ligase UB2D3. In association with CBL, required for proper feedback inhibition of ciliary platelet-derived growth factor receptor-alpha (PDGFRA) signaling pathway via ubiquitination and internalization of PDGFRA. In Rattus norvegicus (Rat), this protein is E3 ubiquitin-protein ligase CBL-B (Cblb).